The primary structure comprises 550 residues: Chaperonin GroEL (550 aa).

Residues 30 to 33 (TLGP), Lys-51, 87 to 91 (DGTTT), Gly-415, 479 to 481 (NAA), and Asp-495 each bind ATP.

The protein belongs to the chaperonin (HSP60) family. In terms of assembly, forms a cylinder of 14 subunits composed of two heptameric rings stacked back-to-back. Interacts with the co-chaperonin GroES.

The protein localises to the cytoplasm. It catalyses the reaction ATP + H2O + a folded polypeptide = ADP + phosphate + an unfolded polypeptide.. Its function is as follows. Together with its co-chaperonin GroES, plays an essential role in assisting protein folding. The GroEL-GroES system forms a nano-cage that allows encapsulation of the non-native substrate proteins and provides a physical environment optimized to promote and accelerate protein folding. The protein is Chaperonin GroEL of Polaromonas sp. (strain JS666 / ATCC BAA-500).